The chain runs to 334 residues: Porphobilinogen deaminase (334 aa).

An S-(dipyrrolylmethanemethyl)cysteine modification is found at Cys-258.

It belongs to the HMBS family. As to quaternary structure, monomer. The cofactor is dipyrromethane.

It catalyses the reaction 4 porphobilinogen + H2O = hydroxymethylbilane + 4 NH4(+). It functions in the pathway porphyrin-containing compound metabolism; protoporphyrin-IX biosynthesis; coproporphyrinogen-III from 5-aminolevulinate: step 2/4. Its function is as follows. Tetrapolymerization of the monopyrrole PBG into the hydroxymethylbilane pre-uroporphyrinogen in several discrete steps. The chain is Porphobilinogen deaminase from Ralstonia nicotianae (strain ATCC BAA-1114 / GMI1000) (Ralstonia solanacearum).